Reading from the N-terminus, the 180-residue chain is Cytidylate kinase (180 aa).

An ATP-binding site is contributed by 7 to 15; it reads GLPGSGTTT.

This sequence belongs to the cytidylate kinase family. Type 2 subfamily.

It is found in the cytoplasm. It carries out the reaction CMP + ATP = CDP + ADP. It catalyses the reaction dCMP + ATP = dCDP + ADP. The chain is Cytidylate kinase from Methanosarcina barkeri (strain Fusaro / DSM 804).